We begin with the raw amino-acid sequence, 210 residues long: Large ribosomal subunit protein uL4 (210 aa).

Over residues 44–54 (KRQGTASTLTR) the composition is skewed to polar residues. Residues 44 to 94 (KRQGTASTLTRSEVRGGGRKPYKQKGTGRARQGSIRTPLRPGGGVIFGPKP) are disordered. Basic residues predominate over residues 60–71 (GGRKPYKQKGTG).

Belongs to the universal ribosomal protein uL4 family. As to quaternary structure, part of the 50S ribosomal subunit.

Functionally, one of the primary rRNA binding proteins, this protein initially binds near the 5'-end of the 23S rRNA. It is important during the early stages of 50S assembly. It makes multiple contacts with different domains of the 23S rRNA in the assembled 50S subunit and ribosome. Its function is as follows. Forms part of the polypeptide exit tunnel. The sequence is that of Large ribosomal subunit protein uL4 from Prochlorococcus marinus subsp. pastoris (strain CCMP1986 / NIES-2087 / MED4).